The following is a 237-amino-acid chain: Sugar fermentation stimulation protein homolog (237 aa).

It belongs to the SfsA family.

The polypeptide is Sugar fermentation stimulation protein homolog (Pseudomonas putida (strain GB-1)).